The chain runs to 142 residues: MVLSPADKTNVKTAWGKVGGHGGEYGAEALERMFLSFPTTKTYFPHFDLSHGSAQVKGHGKKVADALTLAAAHVDDMPSALSALSDLHAHKLRVDPVNFKLLSHCLLVTLAAHHPAEFTPAVHASLDKFLASVSTVLTSKYR.

In terms of domain architecture, Globin spans 2 to 142; sequence VLSPADKTNV…VSTVLTSKYR (141 aa). Phosphoserine is present on Ser4. The residue at position 8 (Lys8) is an N6-succinyllysine. Thr9 is subject to Phosphothreonine. Lys12 carries the N6-succinyllysine modification. Lys17 is modified (N6-acetyllysine; alternate). N6-succinyllysine; alternate is present on Lys17. Position 25 is a phosphotyrosine (Tyr25). A Phosphoserine modification is found at Ser36. N6-succinyllysine is present on Lys41. At Ser50 the chain carries Phosphoserine. His59 contacts O2. His88 serves as a coordination point for heme b. At Ser103 the chain carries Phosphoserine. Thr109 bears the Phosphothreonine mark. Phosphoserine occurs at positions 125 and 132. Residues Thr135 and Thr138 each carry the phosphothreonine modification. Ser139 is modified (phosphoserine).

This sequence belongs to the globin family. Heterotetramer of two alpha chains and two beta chains. In terms of tissue distribution, red blood cells.

Involved in oxygen transport from the lung to the various peripheral tissues. Its function is as follows. Hemopressin acts as an antagonist peptide of the cannabinoid receptor CNR1. Hemopressin-binding efficiently blocks cannabinoid receptor CNR1 and subsequent signaling. This chain is Hemoglobin subunit alpha (HBA), found in Piliocolobus badius (Western red colobus).